Reading from the N-terminus, the 529-residue chain is DEP domain-containing protein 1B (529 aa).

The DEP domain occupies 24-108 (FRAKMPLRKH…DNRHLYRFPP (85 aa)). Phosphoserine is present on serine 160. Residues 201–393 (DSLEEVLDVK…FLMDNYQEIL (193 aa)) enclose the Rho-GAP domain. The residue at position 436 (serine 436) is a Phosphoserine.

This is DEP domain-containing protein 1B (DEPDC1B) from Homo sapiens (Human).